The following is a 1357-amino-acid chain: DNA-directed RNA polymerase subunit beta (1357 aa).

This sequence belongs to the RNA polymerase beta chain family. The RNAP catalytic core consists of 2 alpha, 1 beta, 1 beta' and 1 omega subunit. When a sigma factor is associated with the core the holoenzyme is formed, which can initiate transcription.

It carries out the reaction RNA(n) + a ribonucleoside 5'-triphosphate = RNA(n+1) + diphosphate. Functionally, DNA-dependent RNA polymerase catalyzes the transcription of DNA into RNA using the four ribonucleoside triphosphates as substrates. This Pseudomonas syringae pv. tomato (strain ATCC BAA-871 / DC3000) protein is DNA-directed RNA polymerase subunit beta.